The chain runs to 114 residues: T cell receptor beta variable 6-5 (114 aa).

An N-terminal signal peptide occupies residues 1 to 21 (MSIGLLCCAALSLLWAGPVNA). Residues 22-114 (GVTQTPKFQV…TSVYFCASSY (93 aa)) form the Ig-like domain. Cys-42 and Cys-110 are disulfide-bonded. N-linked (GlcNAc...) asparagine glycosylation is present at Asn-84.

Alpha-beta TR is a heterodimer composed of an alpha and beta chain; disulfide-linked. The alpha-beta TR is associated with the transmembrane signaling CD3 coreceptor proteins to form the TR-CD3 (TcR or TCR). The assembly of alpha-beta TR heterodimers with CD3 occurs in the endoplasmic reticulum where a single alpha-beta TR heterodimer associates with one CD3D-CD3E heterodimer, one CD3G-CD3E heterodimer and one CD247 homodimer forming a stable octameric structure. CD3D-CD3E and CD3G-CD3E heterodimers preferentially associate with TR alpha and TR beta chains, respectively. The association of the CD247 homodimer is the last step of TcR assembly in the endoplasmic reticulum and is required for transport to the cell surface.

Its subcellular location is the cell membrane. Its function is as follows. V region of the variable domain of T cell receptor (TR) beta chain that participates in the antigen recognition. Alpha-beta T cell receptors are antigen specific receptors which are essential to the immune response and are present on the cell surface of T lymphocytes. Recognize peptide-major histocompatibility (MH) (pMH) complexes that are displayed by antigen presenting cells (APC), a prerequisite for efficient T cell adaptive immunity against pathogens. Binding of alpha-beta TR to pMH complex initiates TR-CD3 clustering on the cell surface and intracellular activation of LCK that phosphorylates the ITAM motifs of CD3G, CD3D, CD3E and CD247 enabling the recruitment of ZAP70. In turn ZAP70 phosphorylates LAT, which recruits numerous signaling molecules to form the LAT signalosome. The LAT signalosome propagates signal branching to three major signaling pathways, the calcium, the mitogen-activated protein kinase (MAPK) kinase and the nuclear factor NF-kappa-B (NF-kB) pathways, leading to the mobilization of transcription factors that are critical for gene expression and essential for T cell growth and differentiation. The T cell repertoire is generated in the thymus, by V-(D)-J rearrangement. This repertoire is then shaped by intrathymic selection events to generate a peripheral T cell pool of self-MH restricted, non-autoaggressive T cells. Post-thymic interaction of alpha-beta TR with the pMH complexes shapes TR structural and functional avidity. In Homo sapiens (Human), this protein is T cell receptor beta variable 6-5.